The following is a 480-amino-acid chain: Caspase-8 (480 aa).

Positions 1–218 (MDFQSCLYAI…ELCDSPREQD (218 aa)) are excised as a propeptide. DED domains lie at 3-80 (FQSC…NFLD) and 101-177 (YRVM…KIED). Phosphoserine is present on residues Ser188 and Ser213. Lys226 bears the N6-acetyllysine mark. His319 is an active-site residue. Tyr336 carries the phosphotyrosine modification. Residue Cys362 is part of the active site. Positions 377–387 (FEQQNHTLEVD) are excised as a propeptide. Ser389 is modified (phosphoserine; by CDK1).

The protein belongs to the peptidase C14A family. As to quaternary structure, heterotetramer that consists of two anti-parallel arranged heterodimers, each one formed by a 18 kDa (p18) and a 10 kDa (p10) subunit. Component of the death-induced signaling complex (DISC) composed of cell surface receptor FAS/CD95 or TNFRSF1A, adapter protein FADD and the CASP8 protease; recruitment of CASP8 to the complex is required for processing of CASP8 into the p18 and p10 subunits. Component of the AIM2 PANoptosome complex, a multiprotein complex that drives inflammatory cell death (PANoptosis). Interacts with CFLAR and PEA15. Interacts with RFFL and RNF34; negatively regulate CASP8 through proteasomal degradation. Interacts with TNFAIP8L2. Interacts with CASP8AP2. Interacts with NOL3; decreases CASP8 activity in a mitochondria localization- and phosphorylation-dependent manner and this interaction is dissociated by calcium. Interacts with UBR2. Interacts with RIPK1. Interacts with stimulated TNFRSF10B; this interaction is followed by CASP8 proteolytic cleavage and activation. Generation of the subunits requires association with the death-inducing signaling complex (DISC), whereas additional processing is likely due to the autocatalytic activity of the activated protease. GZMB and CASP10 can be involved in these processing events. Post-translationally, (Microbial infection) Proteolytically cleaved by the cowpox virus CRMA death inhibitory protein. In terms of processing, phosphorylation on Ser-389 during mitosis by CDK1 inhibits activation by proteolysis and prevents apoptosis. This phosphorylation occurs in cancer cell lines, as well as in primary breast tissues and lymphocytes. In terms of tissue distribution, expressed in a wide variety of tissues. Highest expression in spleen, thymus, lung, liver and kidney. Lower expression in heart, brain, testis and skeletal muscle.

It localises to the cytoplasm. Its subcellular location is the nucleus. It carries out the reaction Strict requirement for Asp at position P1 and has a preferred cleavage sequence of (Leu/Asp/Val)-Glu-Thr-Asp-|-(Gly/Ser/Ala).. With respect to regulation, CASP8 activity is restricted by RIPK1. Its activity is regulated as follows. (Microbial infection) Inhibited by baculovirus p35 protein P35. Functionally, thiol protease that plays a key role in programmed cell death by acting as a molecular switch for apoptosis, necroptosis and pyroptosis, and is required to prevent tissue damage during embryonic development and adulthood. Initiator protease that induces extrinsic apoptosis by mediating cleavage and activation of effector caspases responsible for FAS/CD95-mediated and TNFRSF1A-induced cell death. Cleaves and activates effector caspases CASP3, CASP4, CASP6, CASP7, CASP9 and CASP10. Binding to the adapter molecule FADD recruits it to either receptor FAS/CD95 or TNFRSF1A. The resulting aggregate called the death-inducing signaling complex (DISC) performs CASP8 proteolytic activation. The active dimeric enzyme is then liberated from the DISC and free to activate downstream apoptotic proteases. Proteolytic fragments of the N-terminal propeptide (termed CAP3, CAP5 and CAP6) are likely retained in the DISC. In addition to extrinsic apoptosis, also acts as a negative regulator of necroptosis: acts by cleaving RIPK1 at 'Asp-325', which is crucial to inhibit RIPK1 kinase activity, limiting TNF-induced apoptosis, necroptosis and inflammatory response. Also able to initiate pyroptosis by mediating cleavage and activation of gasdermin-C and -D (GSDMC and GSDMD, respectively): gasdermin cleavage promotes release of the N-terminal moiety that binds to membranes and forms pores, triggering pyroptosis. Initiates pyroptosis following inactivation of MAP3K7/TAK1. Also acts as a regulator of innate immunity by mediating cleavage and inactivation of N4BP1 downstream of TLR3 or TLR4, thereby promoting cytokine production. May participate in the Granzyme B (GZMB) cell death pathways. Cleaves PARP1 and PARP2. The polypeptide is Caspase-8 (Mus musculus (Mouse)).